The following is a 577-amino-acid chain: Nuclear fusion protein tht1 (577 aa).

The N-terminal stretch at 1–29 (MKFHPTRPFGLYFEFFIIISFFFTSESTG) is a signal peptide. Topologically, residues 30-404 (DVESFMKYSN…MNVYFKGLSN (375 aa)) are lumenal. 2 N-linked (GlcNAc...) asparagine glycosylation sites follow: Asn163 and Asn372. A helical membrane pass occupies residues 405 to 425 (IISSFAFIGFTLFATLSSLFF). Topologically, residues 426 to 433 (KVLKIHRR) are cytoplasmic. A helical transmembrane segment spans residues 434–454 (PIIVFGSLSIIFIHIYCFKIT). Residues 455–470 (SWVNLYGWITCTIART) lie on the Lumenal side of the membrane. Residues 471–491 (LSFIKLNIRTFYLTAFLCALL) form a helical membrane-spanning segment. Residues 492–577 (NFLRYLKYRN…ESLEQSPWWD (86 aa)) lie on the Cytoplasmic side of the membrane.

This sequence belongs to the KAR5 family. N-glycosylated.

It localises to the endoplasmic reticulum membrane. The protein localises to the nucleus membrane. Its function is as follows. Required for nuclear membrane fusion during karyogamy. The polypeptide is Nuclear fusion protein tht1 (tht1) (Schizosaccharomyces pombe (strain 972 / ATCC 24843) (Fission yeast)).